An 880-amino-acid chain; its full sequence is Dynamin-like protein A (880 aa).

The segment at M1–D124 is disordered. Over residues D8–E20 the composition is skewed to basic and acidic residues. Polar residues predominate over residues P22–Q31. Over residues S32 to T68 the composition is skewed to low complexity. Residues Y69–E152 adopt a coiled-coil conformation. Basic and acidic residues-rich tracts occupy residues E77–L94 and K103–D124. Positions A191–P478 constitute a Dynamin-type G domain. Residues G201–S208 are G1 motif. G201–S208 provides a ligand contact to GTP. The segment at I227 to K240 is G2 motif. The interval D315 to G318 is G3 motif. Residues D315–L319 and T380–H383 each bind GTP. The segment at T380–H383 is G4 motif. The G5 motif stretch occupies residues L413 to H416. The stretch at R479–K509 forms a coiled coil. Over residues T532–T543 the composition is skewed to polar residues. Residues T532–Q551 form a disordered region. A coiled-coil region spans residues S824–Q861.

The protein belongs to the TRAFAC class dynamin-like GTPase superfamily. Dynamin/Fzo/YdjA family.

The protein localises to the cytoplasm. It is found in the cleavage furrow. It carries out the reaction GTP + H2O = GDP + phosphate + H(+). Involved in cytokinesis. May hydrolyze GTP. In Dictyostelium discoideum (Social amoeba), this protein is Dynamin-like protein A (dlpA).